A 591-amino-acid chain; its full sequence is Trihelix transcription factor PTL (591 aa).

The interval 1-32 (MDQDQHPQYGIPELRQLMKGGGRTTTTTPSTS) is disordered. One can recognise a Myb-like 1 domain in the interval 118 to 177 (GRWPRQETLTLLEIRSRLDHKFKEANQKGPLWDEVSRIMSEEHGYQRSGKKCREKFENLY). Positions 380–410 (CSSPEERTNGNNEIRNNSETQNENGSDQTMT) are disordered. Over residues 388-410 (NGNNEIRNNSETQNENGSDQTMT) the composition is skewed to polar residues. Residues 422 to 479 (WGEQEILKLMEIRTSMDSTFQEILGGCSDEFLWEEIAAKLIQLGFDQRSALLCKEKWE) enclose the Myb-like 2 domain. A disordered region spans residues 491–551 (QINKKRKDNS…SNANANANVT (61 aa)). Over residues 515-534 (IYNNRESGYNDNDPHQINEQ) the composition is skewed to polar residues. Over residues 535-551 (GNVGSSTSNANANANVT) the composition is skewed to low complexity.

In terms of assembly, interacts with KIN10. In terms of tissue distribution, confined to flowers, at low levels. Also present in 7-days-old seedlings. Barely detectable in other tissues such as young seedlings, roots, stems, leaves and siliques. Expressed in flower primordia, more precisely between newly arisen sepal primordia and also at the basal margins of developing sepals.

Its subcellular location is the nucleus. In terms of biological role, transcription factor that prevents growth. Regulates perianth architecture in flower, mostly in the second whorl, probably by suppressing growth between initiating sepals, ensuring that they remain separate, and by modulating organ shapes. Required for the establishment of auxin flux. The polypeptide is Trihelix transcription factor PTL (PTL) (Arabidopsis thaliana (Mouse-ear cress)).